A 431-amino-acid polypeptide reads, in one-letter code: Histidinol dehydrogenase (431 aa).

3 residues coordinate NAD(+): Tyr130, Gln191, and Asn214. Substrate contacts are provided by Ser237, Gln259, and His262. Gln259 and His262 together coordinate Zn(2+). Active-site proton acceptor residues include Glu327 and His328. Residues His328, Asp361, Glu415, and His420 each contribute to the substrate site. Position 361 (Asp361) interacts with Zn(2+). A Zn(2+)-binding site is contributed by His420.

It belongs to the histidinol dehydrogenase family. It depends on Zn(2+) as a cofactor.

The catalysed reaction is L-histidinol + 2 NAD(+) + H2O = L-histidine + 2 NADH + 3 H(+). The protein operates within amino-acid biosynthesis; L-histidine biosynthesis; L-histidine from 5-phospho-alpha-D-ribose 1-diphosphate: step 9/9. Functionally, catalyzes the sequential NAD-dependent oxidations of L-histidinol to L-histidinaldehyde and then to L-histidine. The sequence is that of Histidinol dehydrogenase from Bradyrhizobium diazoefficiens (strain JCM 10833 / BCRC 13528 / IAM 13628 / NBRC 14792 / USDA 110).